A 358-amino-acid chain; its full sequence is UDP-N-acetylglucosamine--N-acetylmuramyl-(pentapeptide) pyrophosphoryl-undecaprenol N-acetylglucosamine transferase (358 aa).

UDP-N-acetyl-alpha-D-glucosamine contacts are provided by residues 11 to 13 (TGG), arginine 163, serine 191, isoleucine 245, and glutamine 290.

Belongs to the glycosyltransferase 28 family. MurG subfamily.

Its subcellular location is the cell inner membrane. The catalysed reaction is di-trans,octa-cis-undecaprenyl diphospho-N-acetyl-alpha-D-muramoyl-L-alanyl-D-glutamyl-meso-2,6-diaminopimeloyl-D-alanyl-D-alanine + UDP-N-acetyl-alpha-D-glucosamine = di-trans,octa-cis-undecaprenyl diphospho-[N-acetyl-alpha-D-glucosaminyl-(1-&gt;4)]-N-acetyl-alpha-D-muramoyl-L-alanyl-D-glutamyl-meso-2,6-diaminopimeloyl-D-alanyl-D-alanine + UDP + H(+). The protein operates within cell wall biogenesis; peptidoglycan biosynthesis. Functionally, cell wall formation. Catalyzes the transfer of a GlcNAc subunit on undecaprenyl-pyrophosphoryl-MurNAc-pentapeptide (lipid intermediate I) to form undecaprenyl-pyrophosphoryl-MurNAc-(pentapeptide)GlcNAc (lipid intermediate II). The sequence is that of UDP-N-acetylglucosamine--N-acetylmuramyl-(pentapeptide) pyrophosphoryl-undecaprenol N-acetylglucosamine transferase from Janthinobacterium sp. (strain Marseille) (Minibacterium massiliensis).